A 287-amino-acid chain; its full sequence is uncharacterized protein (287 aa).

10 helical membrane passes run 4 to 24 (TTNG…SLPA), 36 to 56 (FLTV…LLIF), 66 to 86 (LISL…LTAL), 93 to 113 (SAHA…FGVL), 122 to 142 (VFWI…LIQG), 148 to 168 (LGDA…AEGA), 179 to 199 (VISW…FFFT), 208 to 228 (VPAL…GFVF), 237 to 259 (GIAA…ASVI), and 264 to 286 (VGWA…RRFA). 2 consecutive EamA domains span residues 16–139 (LIFS…GFAL) and 158–284 (VVCG…AARR).

It belongs to the EamA transporter family.

Its subcellular location is the cell membrane. This is an uncharacterized protein from Bacillus subtilis (strain 168).